Here is a 243-residue protein sequence, read N- to C-terminus: Ribonuclease 3 (243 aa).

The RNase III domain occupies 15–144; that stretch reads NDTISKIINY…LIGAIYIDGG (130 aa). Glu57 serves as a coordination point for Mg(2+). Residue Asp61 is part of the active site. Residues Asn130 and Glu133 each contribute to the Mg(2+) site. Residue Glu133 is part of the active site. One can recognise a DRBM domain in the interval 169 to 238; the sequence is DPKTSLQEWT…AELMLEKINN (70 aa).

Belongs to the ribonuclease III family. In terms of assembly, homodimer. Requires Mg(2+) as cofactor.

It localises to the cytoplasm. It carries out the reaction Endonucleolytic cleavage to 5'-phosphomonoester.. Its function is as follows. Digests double-stranded RNA. Involved in the processing of primary rRNA transcript to yield the immediate precursors to the large and small rRNAs (23S and 16S). Processes some mRNAs, and tRNAs when they are encoded in the rRNA operon. Processes pre-crRNA and tracrRNA of type II CRISPR loci if present in the organism. This Wolbachia sp. subsp. Brugia malayi (strain TRS) protein is Ribonuclease 3.